The chain runs to 492 residues: Protein odr-4 homolog (492 aa).

The disordered stretch occupies residues 251-270 (LQPTSTTGGTATASSNTTDS). The segment covering 254 to 268 (TSTTGGTATASSNTT) has biased composition (low complexity). The helical transmembrane segment at 469–489 (MVGIAVALLVLLSSVALHFVL) threads the bilayer.

Belongs to the ODR-4 family.

The protein localises to the membrane. In terms of biological role, may play a role in the trafficking of a subset of G-protein coupled receptors. The sequence is that of Protein odr-4 homolog from Drosophila melanogaster (Fruit fly).